A 151-amino-acid polypeptide reads, in one-letter code: UPF0756 membrane protein Dred_1097 (151 aa).

A run of 4 helical transmembrane segments spans residues 6–26 (IILLSLILMGYLAESALLATA), 52–72 (VGLIFLMLSVLVPLAHDNIVY), 75–95 (LVMKTLSPQGLLALIGGTLAT), and 111–131 (LIFGMVIGSLIGIVFLGGIPI).

Belongs to the UPF0756 family.

The protein localises to the cell membrane. The polypeptide is UPF0756 membrane protein Dred_1097 (Desulforamulus reducens (strain ATCC BAA-1160 / DSM 100696 / MI-1) (Desulfotomaculum reducens)).